A 1042-amino-acid polypeptide reads, in one-letter code: Aldehyde reductase lnaA (1042 aa).

Positions 29–425 (HAFLNPSAMA…GRRDHQVKVR (397 aa)) are adenylation (A) domain. The region spanning 532-609 (DNEDSTRGKL…RLAGILEERI (78 aa)) is the Carrier domain. O-(pantetheine 4'-phosphoryl)serine is present on Ser569. The segment at 655–897 (LTGATGFVGS…FVPVDYVNAV (243 aa)) is short-chain dehydrogenase/reductase (R) domain.

The protein belongs to the NRP synthetase family.

It carries out the reaction L-tyrosinal + AMP + diphosphate + NADP(+) = L-tyrosine + ATP + NADPH + H(+). The protein operates within secondary metabolite biosynthesis. In terms of biological role, non-canonical nonribosomal peptide synthetase; part of the lna gene cluster that mediates the biosynthesis of diastereomeric piperazines. Lna and lnb clusters encode sets of enzymes that produce overlapping sets of previously undescribed metabolites such as piperazinomycin-like metabolites or morpholine. The lna and lnb biosynthetic pathways appear to be part of a signaling network that controls the formation of sclerotia, a resilient overwintering structure. One primary function of the non-canonical nonribosomal peptide synthetases lnaA and lnbA consists in the reduction of L-tyrosine. The presence in the clusters of tailoring enzymes such as the oxidoreductases lnaB, lnbB, lnaE or lnbE, as well as of the cytochrome P450 monooxygenases lnaC, lnaD, or lnbC, might explain formation of various diastereomeric piperazines. The chain is Aldehyde reductase lnaA from Aspergillus flavus (strain ATCC 200026 / FGSC A1120 / IAM 13836 / NRRL 3357 / JCM 12722 / SRRC 167).